A 260-amino-acid polypeptide reads, in one-letter code: Carbonic anhydrase 3 (260 aa).

Ala2 is modified (N-acetylalanine). Positions 3–259 (KEWGYASHNG…INNRVVRASF (257 aa)) constitute an Alpha-carbonic anhydrase domain. Residues Ser29, Ser43, Ser48, Ser50, and Ser55 each carry the phosphoserine modification. The segment at 64–67 (KTCR) is involved in proton transfer. Residue Thr73 is modified to Phosphothreonine. Zn(2+) is bound by residues His94, His96, and His119. A Phosphotyrosine modification is found at Tyr127. Thr129 and Thr176 each carry phosphothreonine. 2 positions are modified to S-glutathionyl cysteine: Cys182 and Cys187. 198 to 199 (TT) is a binding site for substrate. Thr216 carries the post-translational modification Phosphothreonine. A Phosphoserine modification is found at Ser219.

This sequence belongs to the alpha-carbonic anhydrase family. It depends on Zn(2+) as a cofactor. Post-translationally, S-thiolated both by thiol-disulfide exchange with glutathione disulfide and by oxyradical-initiated S-thiolation with reduced glutathione. S-glutathionylated in hepatocytes under oxidative stress. Muscle specific.

It localises to the cytoplasm. It carries out the reaction hydrogencarbonate + H(+) = CO2 + H2O. Its activity is regulated as follows. Activated by proton donors such as imidazole and the dipeptide histidylhistidine. Inhibited by coumarins and sulfonamide derivatives such as acetazolamide. Functionally, reversible hydration of carbon dioxide. The chain is Carbonic anhydrase 3 from Homo sapiens (Human).